Here is a 705-residue protein sequence, read N- to C-terminus: Elongation factor G (705 aa).

The region spanning 8 to 290 (AYYRNIGISA…AVIEYLPAPT (283 aa)) is the tr-type G domain. GTP is bound by residues 17–24 (AHIDAGKT), 88–92 (DTPGH), and 142–145 (NKMD).

Belongs to the TRAFAC class translation factor GTPase superfamily. Classic translation factor GTPase family. EF-G/EF-2 subfamily.

It localises to the cytoplasm. Its function is as follows. Catalyzes the GTP-dependent ribosomal translocation step during translation elongation. During this step, the ribosome changes from the pre-translocational (PRE) to the post-translocational (POST) state as the newly formed A-site-bound peptidyl-tRNA and P-site-bound deacylated tRNA move to the P and E sites, respectively. Catalyzes the coordinated movement of the two tRNA molecules, the mRNA and conformational changes in the ribosome. The chain is Elongation factor G from Baumannia cicadellinicola subsp. Homalodisca coagulata.